The primary structure comprises 157 residues: Universal stress protein Sll1654 (157 aa).

Belongs to the universal stress protein A family.

This is Universal stress protein Sll1654 from Synechocystis sp. (strain ATCC 27184 / PCC 6803 / Kazusa).